Here is a 436-residue protein sequence, read N- to C-terminus: Serine protease hepsin (436 aa).

A disordered region spans residues 1–29; sequence MAKEDEEPGAHRGGSTCSRPQPGKGGRTA. Residues 1 to 38 are Cytoplasmic-facing; sequence MAKEDEEPGAHRGGSTCSRPQPGKGGRTAACCSRPKVA. A helical; Signal-anchor for type II membrane protein transmembrane segment spans residues 39 to 59; that stretch reads ALIVGTLLFLTGIGAASWAIV. Residues 60–436 lie on the Extracellular side of the membrane; sequence TILLQSDQEP…SEASGMVTQP (377 aa). The SRCR domain occupies 73-170; sequence VQLSPGDSRL…RGRFLTATCQ (98 aa). Cystine bridges form between C96–C159, C109–C169, C138–C157, C172–C296, C207–C223, C310–C378, C341–C357, and C368–C400. A glycan (N-linked (GlcNAc...) asparagine) is linked at N131. Residues 182–424 form the Peptidase S1 domain; sequence IVGGQDSSLG…FREWIFKAIK (243 aa). Active-site charge relay system residues include H222 and D276. The active-site Charge relay system is the S372.

It belongs to the peptidase S1 family. As to expression, detected in kidney, in thick ascending tubule epithelial cells (at protein level). Detected in kidney and liver.

The protein resides in the apical cell membrane. Its subcellular location is the cell membrane. It is found in the secreted. It catalyses the reaction Cleavage after basic amino-acid residues, with Arg strongly preferred to Lys.. Its function is as follows. Serine protease that cleaves extracellular substrates, and contributes to the proteolytic processing of growth factors, such as HGF and MST1/HGFL. Plays a role in cell growth and maintenance of cell morphology. Plays a role in the proteolytic processing of ACE2. Mediates the proteolytic cleavage of urinary UMOD that is required for UMOD polymerization. This Mus musculus (Mouse) protein is Serine protease hepsin (Hpn).